The primary structure comprises 935 residues: Protein translocase subunit SecA (935 aa).

Residues Gln-90, 108-112 (GEGKT), and Asp-504 contribute to the ATP site. A disordered region spans residues 543–568 (GGRRPQGFGTSKKKGKNWSPSDADIF).

It belongs to the SecA family. In terms of assembly, monomer and homodimer. Part of the essential Sec protein translocation apparatus which comprises SecA, SecYEG and auxiliary proteins SecDF. Other proteins may also be involved.

The protein resides in the cell inner membrane. The protein localises to the cellular thylakoid membrane. Its subcellular location is the cytoplasm. The enzyme catalyses ATP + H2O + cellular proteinSide 1 = ADP + phosphate + cellular proteinSide 2.. Part of the Sec protein translocase complex. Interacts with the SecYEG preprotein conducting channel. Has a central role in coupling the hydrolysis of ATP to the transfer of proteins into and across the cell membrane, serving as an ATP-driven molecular motor driving the stepwise translocation of polypeptide chains across the membrane. Its function is as follows. Probably participates in protein translocation into and across both the cytoplasmic and thylakoid membranes in cyanobacterial cells. This is Protein translocase subunit SecA from Rippkaea orientalis (strain PCC 8801 / RF-1) (Cyanothece sp. (strain PCC 8801)).